Reading from the N-terminus, the 161-residue chain is Glycine cleavage system H protein 2 (161 aa).

The region spanning Thr34–Lys116 is the Lipoyl-binding domain. At Lys75 the chain carries N6-lipoyllysine.

This sequence belongs to the GcvH family. As to quaternary structure, the glycine cleavage system is composed of four proteins: P, T, L and H. It depends on (R)-lipoate as a cofactor.

Its function is as follows. The glycine cleavage system catalyzes the degradation of glycine. The H protein shuttles the methylamine group of glycine from the P protein to the T protein. The polypeptide is Glycine cleavage system H protein 2 (Aquifex aeolicus (strain VF5)).